Reading from the N-terminus, the 499-residue chain is Glycerol kinase (499 aa).

Thr-13 is an ADP binding site. The ATP site is built by Thr-13, Thr-14, and Ser-15. Thr-13 is a binding site for sn-glycerol 3-phosphate. Arg-17 contributes to the ADP binding site. Residues Arg-83, Glu-84, Tyr-135, and Asp-245 each coordinate sn-glycerol 3-phosphate. Residues Arg-83, Glu-84, Tyr-135, Asp-245, and Gln-246 each contribute to the glycerol site. ADP-binding residues include Thr-267 and Gly-310. Residues Thr-267, Gly-310, Gln-314, and Gly-411 each contribute to the ATP site. Positions 411 and 415 each coordinate ADP.

It belongs to the FGGY kinase family.

The catalysed reaction is glycerol + ATP = sn-glycerol 3-phosphate + ADP + H(+). It participates in polyol metabolism; glycerol degradation via glycerol kinase pathway; sn-glycerol 3-phosphate from glycerol: step 1/1. With respect to regulation, inhibited by fructose 1,6-bisphosphate (FBP). Functionally, key enzyme in the regulation of glycerol uptake and metabolism. Catalyzes the phosphorylation of glycerol to yield sn-glycerol 3-phosphate. The sequence is that of Glycerol kinase from Xanthomonas campestris pv. campestris (strain 8004).